A 227-amino-acid polypeptide reads, in one-letter code: PKHD-type hydroxylase M446_1130 (227 aa).

In terms of domain architecture, Fe2OG dioxygenase spans 78–178 (QIFPPLFNRY…RVASFFWLQS (101 aa)). Fe cation contacts are provided by H96, D98, and H159. R169 is a 2-oxoglutarate binding site.

Requires Fe(2+) as cofactor. It depends on L-ascorbate as a cofactor.

The chain is PKHD-type hydroxylase M446_1130 from Methylobacterium sp. (strain 4-46).